The following is a 246-amino-acid chain: MELTEKVVILKTGKFKENDLWVRFLSATRGVQNAFAFGGSRSRRRFGGCLEPFSQVLFKTGTNKTGTYQVLQEGSLVKGYPGIRSDFRKMGLAANCFKFIESAVLERDGNRAVFDLLTETLDVIEEADPDDFFPLFFRAKVAFEQGYNPDFTICAQCGKPLFSSRPVVFNIEKGQLNCLDCNDGRQGETISSGTARTLAWIQDTGPASWINLRLPADIRQECFSVMDRFMAYHMGVVWEGNGYRKI.

Belongs to the RecO family.

Its function is as follows. Involved in DNA repair and RecF pathway recombination. This is DNA repair protein RecO from Maridesulfovibrio salexigens (strain ATCC 14822 / DSM 2638 / NCIMB 8403 / VKM B-1763) (Desulfovibrio salexigens).